Reading from the N-terminus, the 1128-residue chain is Membrane-associated guanylate kinase, WW and PDZ domain-containing protein 3 (1128 aa).

One can recognise a PDZ 1 domain in the interval 22–108 (WGGPAGPDPE…PVRLKTVRPG (87 aa)). One can recognise a Guanylate kinase-like domain in the interval 116–290 (RHYLSLQFQK…SMDFRNYMSR (175 aa)). Residue 123–130 (FQKGSIDH) coordinates ATP. The disordered stretch occupies residues 184–276 (TYDGNFYGTP…DWMKPVPSYN (93 aa)). The span at 193 to 204 (PKPPAEPSPFQP) shows a compositional bias: pro residues. Positions 238–247 (LPEDEEEEEK) are enriched in acidic residues. Over residues 257–267 (ENKEKHSDSSD) the composition is skewed to basic and acidic residues. WW domains follow at residues 295-328 (EPLP…DPRL) and 341-374 (GELP…NPVL). 2 consecutive PDZ domains span residues 412–494 (RTSL…TLCR) and 581–657 (TIPL…LILR). Residues 658 to 688 (GGPPSPTKTGKMKDKQESSGSLEALSDAIPQ) are disordered. PDZ domains follow at residues 728-810 (DVFL…TVRR) and 852-939 (DVCL…VAEE). 2 disordered regions span residues 939-985 (EEHR…GKEV) and 999-1018 (LAQP…SQAQ). Polar residues-rich tracts occupy residues 946-956 (SGTNSAKQSPA) and 965-974 (AQSSASSTDR). The PDZ 6 domain maps to 1024 to 1106 (PVELERGPRG…KVLLLLRPGT (83 aa)).

The protein belongs to the MAGUK family.

The protein localises to the cell membrane. Its subcellular location is the cell junction. It localises to the tight junction. In terms of biological role, acts as a scaffolding protein at cell-cell junctions, thereby regulating various cellular and signaling processes. The polypeptide is Membrane-associated guanylate kinase, WW and PDZ domain-containing protein 3 (MAGI3) (Gallus gallus (Chicken)).